We begin with the raw amino-acid sequence, 99 residues long: Small integral membrane protein 14 (99 aa).

The Lumenal segment spans residues 1 to 49; that stretch reads MAEGGFDPCECVCSHEHAMRRLINLLRQSQSYCTDTECLRELPGPSSDS. A helical membrane pass occupies residues 50–70; the sequence is GISITVILMAWMVIAMLLFLL. Topologically, residues 71 to 99 are cytoplasmic; it reads RPPNLRGSSLPGKPSSPHSGQDPPAPPVD. A disordered region spans residues 77–99; the sequence is GSSLPGKPSSPHSGQDPPAPPVD.

In terms of tissue distribution, ubiquitously expressed.

It localises to the endoplasmic reticulum membrane. The sequence is that of Small integral membrane protein 14 (Smim14) from Mus musculus (Mouse).